We begin with the raw amino-acid sequence, 440 residues long: 2-phosphinomethylmalate synthase (440 aa).

Residues 39-313 (VWLSETTHRD…GARVNLPAVN (275 aa)) form the Pyruvate carboxyltransferase domain.

Belongs to the alpha-IPM synthase/homocitrate synthase family. As to quaternary structure, homodimer. The cofactor is Mn(2+). Co(2+) serves as cofactor.

It carries out the reaction 3-(hydrohydroxyphosphoryl)pyruvate + acetyl-CoA + H2O = phosphinomethylmalate + CoA + H(+). It participates in secondary metabolite biosynthesis; bialaphos biosynthesis. Strongly inhibited by p-chloromercuribenzoate (pCMB), iodoacetamide (IA) and EDTA. Functionally, involved in the biosynthesis of phosphinothricin tripeptide (PTT), also known as bialaphos (BA), a natural-product antibiotic and potent herbicide. Catalyzes the condensation berween phosphinopyruvic acid (PPA), an analog of oxalacetic acid, and acetyl-CoA to form R-2-phosphinomethylmalic acid (PMM). Can also act on oxaloacetate, but shows no activity when acetyl-CoA is substituted by propionyl-CoA or butyryl-CoA. The protein is 2-phosphinomethylmalate synthase of Streptomyces hygroscopicus.